The primary structure comprises 611 residues: Serine/arginine repetitive matrix protein 4 (611 aa).

Disordered stretches follow at residues 38-248 (ARKP…PLQM) and 263-611 (SAAD…STRR). Basic residues-rich tracts occupy residues 107-123 (RGKKKKKKSTRKKRRRS) and 131-189 (VKKK…HRCP). Residues 190 to 202 (SRSQSSESRPSSC) show a composition bias toward low complexity. The segment covering 203-216 (ESRHRGRSPEEGQK) has biased composition (basic and acidic residues). Residues 217-226 (SRRRHSRRCS) show a composition bias toward basic residues. Residues 270–290 (KTASPLTTSRGRSQEYDSGND) are compositionally biased toward polar residues. Over residues 291–301 (TSSPPSTQTSS) the composition is skewed to low complexity. The segment covering 322–341 (LNSGNTSDSGNSFTTSSPQN) has biased composition (polar residues). Composition is skewed to low complexity over residues 390–422 (SRSSSYASTRSSSHSSRSPNPRASPRYTQSRST) and 430–461 (SRSPSYSSKSGKRSPPSRSSRSRRSPSYSRYS). A compositionally biased stretch (basic and acidic residues) spans 462 to 482 (PSRERDPKYSEKDSQQRERER). Residues 483–498 (ARRRRRSYSPMRKRRR) show a composition bias toward basic residues. Positions 499–508 (DSPSHLEARR) are enriched in basic and acidic residues. Residues 522–549 (PSPSSSGSLSSTSSWYSSSSSRSASRSY) show a composition bias toward low complexity. Over residues 550 to 564 (SRSRSRSRSRRRSRT) the composition is skewed to basic residues. Residues 565–580 (RTSSSSSSRSPSPGSR) are compositionally biased toward low complexity. Over residues 581–595 (SRSRSRSRSRSRSRS) the composition is skewed to basic residues. Residues 596-611 (QSRSYSSADSYSSTRR) are compositionally biased toward low complexity.

This sequence belongs to the nSR100 family. Post-translationally, phosphorylated. In terms of tissue distribution, specifically expressed in neuronal cells (at protein level). Expressed in the cerebellum.

The protein resides in the nucleus. Functionally, splicing factor specifically required for neural cell differentiation. Acts in conjunction with nPTB/PTBP2 by binding directly to its regulated target transcripts and promotes neural-specific exon inclusion in many genes that function in neural cell differentiation. Required to promote the inclusion of neural-specific exon 10 in nPTB/PTBP2, leading to increased expression of neural-specific nPTB/PTBP2. Also promotes the inclusion of exon 16 in DAAM1 in neuron extracts. Promotes alternative splicing of REST transcripts to produce REST isoform 3 (REST4) with greatly reduced repressive activity, thereby activating expression of REST targets in neural cells. Plays an important role during embryonic development as well as in the proper functioning of the adult nervous system. Regulates alternative splicing events in genes with important neuronal functions. The sequence is that of Serine/arginine repetitive matrix protein 4 (SRRM4) from Homo sapiens (Human).